Here is a 259-residue protein sequence, read N- to C-terminus: Glutamate 5-kinase (259 aa).

Residue K18 coordinates ATP. Substrate is bound by residues S54, D141, and N153. An ATP-binding site is contributed by 173–174; that stretch reads SD.

This sequence belongs to the glutamate 5-kinase family.

The protein resides in the cytoplasm. The catalysed reaction is L-glutamate + ATP = L-glutamyl 5-phosphate + ADP. It functions in the pathway amino-acid biosynthesis; L-proline biosynthesis; L-glutamate 5-semialdehyde from L-glutamate: step 1/2. Its function is as follows. Catalyzes the transfer of a phosphate group to glutamate to form L-glutamate 5-phosphate. The polypeptide is Glutamate 5-kinase (Clavibacter michiganensis subsp. michiganensis (strain NCPPB 382)).